A 175-amino-acid polypeptide reads, in one-letter code: Ferritin light chain (175 aa).

Residue Ser-2 is modified to N-acetylserine. The Ferritin-like diiron domain maps to 7–156 (QNYSTEVEAA…DHLTNLRRLA (150 aa)). The Fe cation site is built by Glu-54, Glu-58, Glu-61, and Glu-64.

It belongs to the ferritin family. As to quaternary structure, oligomer of 24 subunits. There are two types of subunits: L (light) chain and H (heavy) chain. The major chain can be light or heavy, depending on the species and tissue type. The functional molecule forms a roughly spherical shell with a diameter of 12 nm and contains a central cavity into which the insoluble mineral iron core is deposited. Interacts with NCOA4.

Its subcellular location is the cytoplasmic vesicle. The protein localises to the autophagosome. The protein resides in the cytoplasm. It localises to the autolysosome. In terms of biological role, stores iron in a soluble, non-toxic, readily available form. Important for iron homeostasis. Iron is taken up in the ferrous form and deposited as ferric hydroxides after oxidation. Also plays a role in delivery of iron to cells. Mediates iron uptake in capsule cells of the developing kidney. Delivery to lysosomes by the cargo receptor NCOA4 for autophagic degradation and release or iron. The polypeptide is Ferritin light chain (FTL) (Bos taurus (Bovine)).